The primary structure comprises 348 residues: Eukaryotic translation initiation factor 3 subunit F (348 aa).

The MPN domain maps to 30–166 (VVIQPQAIFS…TRTYISAPVG (137 aa)). Gly residues predominate over residues 312–327 (STAIGGTGAESGGQRG). The disordered stretch occupies residues 312–348 (STAIGGTGAESGGQRGGQRNNRQRGGQQRNQAEELRA). Over residues 328–341 (GQRNNRQRGGQQRN) the composition is skewed to low complexity.

The protein belongs to the eIF-3 subunit F family. Component of the eukaryotic translation initiation factor 3 (eIF-3) complex.

The protein resides in the cytoplasm. Component of the eukaryotic translation initiation factor 3 (eIF-3) complex, which is involved in protein synthesis of a specialized repertoire of mRNAs and, together with other initiation factors, stimulates binding of mRNA and methionyl-tRNAi to the 40S ribosome. The eIF-3 complex specifically targets and initiates translation of a subset of mRNAs involved in cell proliferation. The polypeptide is Eukaryotic translation initiation factor 3 subunit F (Coccidioides immitis (strain RS) (Valley fever fungus)).